The chain runs to 311 residues: Class E basic helix-loop-helix protein 22 (311 aa).

Residues 22–170 (AKRMESAFRS…GGSKKSKEQK (149 aa)) form a disordered region. Residues 81–96 (GESASRSSVAESSGGE) show a composition bias toward low complexity. Gly residues predominate over residues 125–147 (AGGGGGGGGGGGGGPGGGGGGGL). One can recognise a bHLH domain in the interval 171 to 225 (ALRLNINARERRRMHDLNDALDELRAVIPYAHSPSVRKLSKIATLLLAKNYILMQ).

It is found in the nucleus. May act as a transcriptional repressor. The polypeptide is Class E basic helix-loop-helix protein 22 (BHLHE22) (Gallus gallus (Chicken)).